Here is a 239-residue protein sequence, read N- to C-terminus: Tetratricopeptide repeat protein 9B (239 aa).

Disordered regions lie at residues 1–57 (MQRG…LGAA) and 99–126 (QGAR…SEEQ). 2 positions are modified to phosphoserine: S7 and S27. Residues 16–31 (PEPPPRPPPALSPPGS) show a composition bias toward pro residues. Residues 65 to 99 (AVAFKAEGQRCYREKKFREAIGKYHRALLQLKAAQ) form a TPR 1 repeat. Positions 106–116 (LPAPAPGPTSS) are enriched in pro residues. One copy of the TPR 2 repeat lies at 171–204 (FKATYRAGIAFYHLGDYARALRYLQEARSREPTD).

It belongs to the TTC9 family.

This chain is Tetratricopeptide repeat protein 9B (TTC9B), found in Homo sapiens (Human).